A 368-amino-acid chain; its full sequence is MMSQLAAPHVTTPHQDGFAMPAEWAPHDAVWMIWPYRTDNWREQGVPAQKTFARVAEAIAQNTPVIMGVPARYMADAQKVMPVNVTLVEMESDDAWMRDTGPTIVLNQAGERRGIDWQFNAWGGELGGLYEDWRQDEKVAAQVLDYHQAAGYAAPLILEGGSIHVDGEGTLLTTAECLLNPNRNPHLSKAEIEQLMRDYLSISTIIWLEEGVYNDETDGHIDNMCCFVRPGEVALHWTDDENDPQYARSVAAYEVLSAARDAQGRELKIWKLPAPGPLHATKEEAQGVDSGDAVERLAGSRLAGSYVNFLISNQQIIFPLLDEKTDDVARDLLQQMFPDYLISGVPAREILLGGGNIHCITQQIPTAK.

The active-site Amidino-cysteine intermediate is Cys-359.

It belongs to the agmatine deiminase family.

It catalyses the reaction agmatine + H2O = N-carbamoylputrescine + NH4(+). This Pectobacterium atrosepticum (strain SCRI 1043 / ATCC BAA-672) (Erwinia carotovora subsp. atroseptica) protein is Putative agmatine deiminase.